We begin with the raw amino-acid sequence, 559 residues long: DNA primase (559 aa).

The CHC2-type zinc-finger motif lies at 37–61; sequence CPFHEERSASFSVNQIKGFYHCFGC. The Toprim domain maps to 246 to 327; the sequence is KQVIVTEGYL…RGGVILFENN (82 aa). Mg(2+) is bound by residues Glu252, Asp296, and Asp298.

This sequence belongs to the DnaG primase family. In terms of assembly, monomer. The C-terminal domain DnaB-binding domain exists as a dimer in solution. Interacts with DnaB via its C-terminal domain (residues 415-559 of DnaG); up to 3 DnaG fragments bind to a DnaB hexamer. It depends on Zn(2+) as a cofactor. The cofactor is Mg(2+).

It catalyses the reaction ssDNA + n NTP = ssDNA/pppN(pN)n-1 hybrid + (n-1) diphosphate.. In terms of biological role, RNA polymerase that catalyzes the synthesis of short RNA molecules used as primers for DNA polymerase during DNA replication. Stimulates the 5'-3' DNA helicase activity of DnaB. The protein is DNA primase of Helicobacter pylori (strain ATCC 700392 / 26695) (Campylobacter pylori).